The chain runs to 527 residues: 4-alpha-glucanotransferase (527 aa).

The protein belongs to the disproportionating enzyme family.

The protein resides in the cytoplasm. It catalyses the reaction Transfers a segment of a (1-&gt;4)-alpha-D-glucan to a new position in an acceptor, which may be glucose or a (1-&gt;4)-alpha-D-glucan.. The chain is 4-alpha-glucanotransferase (malQ) from Chlamydia muridarum (strain MoPn / Nigg).